We begin with the raw amino-acid sequence, 84 residues long: MPAPTKRERQNRKRFERNRSVRTRLRNLSKKFYRALDAGDLESARSVRDEAQKAYDKAAGKGIIHRNKASRKLSRFDRALAGRG.

Residues 1 to 22 (MPAPTKRERQNRKRFERNRSVR) are disordered. A compositionally biased stretch (basic residues) spans 9-22 (RQNRKRFERNRSVR).

This sequence belongs to the bacterial ribosomal protein bS20 family.

Binds directly to 16S ribosomal RNA. The polypeptide is Small ribosomal subunit protein bS20 (Rubrobacter xylanophilus (strain DSM 9941 / JCM 11954 / NBRC 16129 / PRD-1)).